A 456-amino-acid polypeptide reads, in one-letter code: Armadillo repeat-containing X-linked protein 1 (456 aa).

Residues 1–6 (MGRTRE) lie on the Mitochondrial intermembrane side of the membrane. Mitochondrion outer membrane (MOM)-targeting sequence stretches follow at residues 1 to 6 (MGRTRE) and 26 to 36 (RLTWGKDENEK). Residues 7–29 (AGCVAAGMVIGAGACYCVYRLTW) form a helical; Signal-anchor membrane-spanning segment. Residues 30 to 456 (GKDENEKLWD…VKVLKVLTKL (427 aa)) lie on the Cytoplasmic side of the membrane. Disordered stretches follow at residues 37-106 (LWDE…SGGG) and 139-186 (RTLT…APAT). Over residues 38 to 50 (WDEEEEEEEEEEE) the composition is skewed to acidic residues. Composition is skewed to basic and acidic residues over residues 51 to 62 (KSCSDKTEKELK) and 72 to 81 (KPQDDSKSKV). A compositionally biased stretch (basic residues) spans 162-180 (SRARNRTSGKVKRKNRSKS). 4 ARM repeats span residues 198–238 (PYKI…NNAA), 240–279 (SFNQ…NLSV), 361–401 (PAMT…NIND), and 418–456 (SSLF…LTKL).

Belongs to the eutherian X-chromosome-specific Armcx family. Interacts with MIRO1. Widely expressed in the adult nervous tissue, especially in the forebrain, including the cerebral cortex, hippocampus and thalamus.

The protein localises to the mitochondrion. Its subcellular location is the mitochondrion outer membrane. Functionally, regulates mitochondrial transport during axon regeneration. Increases the proportion of motile mitochondria by recruiting stationary mitochondria into the motile pool. Enhances mitochondria movement and neurite growth in both adult axons and embryonic neurons. Promotes neuronal survival and axon regeneration after nerve injury. May link mitochondria to the Trak1-kinesin motor complex via its interaction with Miro1. This chain is Armadillo repeat-containing X-linked protein 1 (Armcx1), found in Mus musculus (Mouse).